Here is a 566-residue protein sequence, read N- to C-terminus: Erythroid membrane-associated protein (566 aa).

The signal sequence occupies residues 1-29 (MERPSPCGSWLVGCLFTIAVFQPPVQVLG). An Ig-like V-type domain is found at 30–139 (DAGKVYIAPL…SSREDNVTLQ (110 aa)). Topologically, residues 30–246 (DAGKVYIAPL…PERGSLSSPA (217 aa)) are extracellular. Cysteine 47 and cysteine 123 are joined by a disulfide. Asparagine 135 and asparagine 214 each carry an N-linked (GlcNAc...) asparagine glycan. Residues 247–267 (VALSVVLPVLGLLILLGIWLI) traverse the membrane as a helical segment. Over 268-566 (CKQKKSKEKL…ALKGLKVPSL (299 aa)) the chain is Cytoplasmic. In terms of domain architecture, B30.2/SPRY spans 311–509 (KLKRAAANAG…LIICTELQKS (199 aa)). At serine 509 the chain carries Phosphoserine.

It belongs to the immunoglobulin superfamily. BTN/MOG family. Post-translationally, glycosylated. Expressed in spleen and bone marrow.

The protein resides in the cell membrane. The protein localises to the cytoplasm. Functionally, possible role as a cell-adhesion or receptor molecule of erythroid cells. In Mus musculus (Mouse), this protein is Erythroid membrane-associated protein (Ermap).